Consider the following 202-residue polypeptide: Probable nicotinate-nucleotide adenylyltransferase (202 aa).

Belongs to the NadD family.

It catalyses the reaction nicotinate beta-D-ribonucleotide + ATP + H(+) = deamido-NAD(+) + diphosphate. It functions in the pathway cofactor biosynthesis; NAD(+) biosynthesis; deamido-NAD(+) from nicotinate D-ribonucleotide: step 1/1. Catalyzes the reversible adenylation of nicotinate mononucleotide (NaMN) to nicotinic acid adenine dinucleotide (NaAD). The sequence is that of Probable nicotinate-nucleotide adenylyltransferase from Clostridium perfringens (strain SM101 / Type A).